The chain runs to 498 residues: AP2-like ethylene-responsive transcription factor AIL7 (498 aa).

The span at 186-195 (TSDQPLSCNN) shows a compositional bias: polar residues. The segment at 186–220 (TSDQPLSCNNGERGGNSNKKKTVSKKETSDDSKKK) is disordered. A compositionally biased stretch (basic and acidic residues) spans 209 to 220 (SKKETSDDSKKK). DNA-binding regions (AP2/ERF) lie at residues 231 to 297 (IYRG…TNFP) and 333 to 391 (IYRG…TNFE). Positions 422-451 (ESPSSSSSDHNLQQQQLLPSSSPSDQNPNS) are enriched in low complexity. A disordered region spans residues 422–452 (ESPSSSSSDHNLQQQQLLPSSSPSDQNPNSI).

The protein belongs to the AP2/ERF transcription factor family. AP2 subfamily. In terms of assembly, interacts with HDG2, and possibly with HDG3, HDG7, ANL2, ATML1 and PDF2. In terms of tissue distribution, expressed in roots, seedlings, inflorescence, and siliques. Also detected at low levels in leaves.

Its subcellular location is the nucleus. Probably acts as a transcriptional activator. Binds to the GCC-box pathogenesis-related promoter element. May be involved in the regulation of gene expression by stress factors and by components of stress signal transduction pathways. The chain is AP2-like ethylene-responsive transcription factor AIL7 from Arabidopsis thaliana (Mouse-ear cress).